The chain runs to 336 residues: Fructose-1,6-bisphosphatase class 1 (336 aa).

Positions 90, 112, 114, and 115 each coordinate Mg(2+). Residues 115-118 (DGSS), asparagine 211, and lysine 277 contribute to the substrate site. Glutamate 283 lines the Mg(2+) pocket.

It belongs to the FBPase class 1 family. In terms of assembly, homotetramer. Mg(2+) serves as cofactor.

Its subcellular location is the cytoplasm. The catalysed reaction is beta-D-fructose 1,6-bisphosphate + H2O = beta-D-fructose 6-phosphate + phosphate. The protein operates within carbohydrate biosynthesis; gluconeogenesis. The polypeptide is Fructose-1,6-bisphosphatase class 1 (Pseudomonas aeruginosa (strain UCBPP-PA14)).